The chain runs to 195 residues: Probable GTP-binding protein EngB (195 aa).

The EngB-type G domain maps to 22 to 194; sequence LKGEVAFVGR…LDLISTLLKE (173 aa). GTP is bound by residues 30–37, 56–60, 74–77, 141–144, and 173–175; these read GRSNVGKS, GKTRS, DLPG, TKMD, and TSS. Ser-37 and Thr-58 together coordinate Mg(2+).

It belongs to the TRAFAC class TrmE-Era-EngA-EngB-Septin-like GTPase superfamily. EngB GTPase family. Requires Mg(2+) as cofactor.

Necessary for normal cell division and for the maintenance of normal septation. This chain is Probable GTP-binding protein EngB, found in Thermotoga sp. (strain RQ2).